The sequence spans 203 residues: High frequency lysogenization protein HflD homolog (203 aa).

The protein belongs to the HflD family.

The protein resides in the cytoplasm. Its subcellular location is the cell inner membrane. This Pasteurella multocida (strain Pm70) protein is High frequency lysogenization protein HflD homolog.